The primary structure comprises 494 residues: Calmodulin-binding protein 60 A (494 aa).

The tract at residues 1–62 is calmodulin-binding; that stretch reads MRIPTYDFGS…AGIKWICEKE (62 aa). The DNA-binding stretch occupies residues 132 to 252; it reads VSDWTDEDIR…AFHRRLNLSN (121 aa).

The protein belongs to the plant ACBP60 protein family. As to quaternary structure, interacts with calmodulin (CaM). Expressed in stems, flowers and root.

It localises to the nucleus. In terms of biological role, transcription activator that binds DNA in a sequence-specific manner, likely 5'-GAAATTTTGG-3', to promote the expression of target genes. The protein is Calmodulin-binding protein 60 A of Arabidopsis thaliana (Mouse-ear cress).